We begin with the raw amino-acid sequence, 223 residues long: HTH-type transcriptional dual regulator CecR (223 aa).

Positions 11-70 (EQAKKQLIAAALAQFGEYGMNATTREIAAQAGQNIAAITYYFGSKEDLYLACAQWIADFI) constitute an HTH tetR-type domain. The segment at residues 33-52 (TTREIAAQAGQNIAAITYYF) is a DNA-binding region (H-T-H motif).

The protein localises to the cytoplasm. Regulates transcription of the cecR-ybhGFSR operon and the rhlE gene, which altogether are involved in the control of sensitivity to cefoperazone and chloramphenicol. Represses the cecR-ybhGFSR operon and activates the rhlE operon. Acts by binding to a palindromic sequence within the intergenic spacer located between these two divergently transcribed operons. The protein is HTH-type transcriptional dual regulator CecR of Shigella flexneri.